The sequence spans 288 residues: MAAGKEIRGKIKSVENTKKITKAMEMVAASKMRKAQDRMRAARPYSEKIRNIAANLGQANPEYVHPFMKSNDAKTAGFIVVTTDKGLCGGMNTNVLRAVTAKLRELQSQGVSTQAVAIGNKGLGFLNRIGAQVVSHATGLGDTPHLDKLIGPVKVLLDAYAEGKINGVYLAYTKFINTMKQESVVEQLLPLSSEKMQAEKTEHGWDYIYEPDAQSVIDDLLVRYVESLIYQAVAENMASEQSARMVAMKAATDNAGNVIGELKLVYNKTRQAAITKELSEIVAGAAAV.

Belongs to the ATPase gamma chain family. In terms of assembly, F-type ATPases have 2 components, CF(1) - the catalytic core - and CF(0) - the membrane proton channel. CF(1) has five subunits: alpha(3), beta(3), gamma(1), delta(1), epsilon(1). CF(0) has three main subunits: a, b and c.

Its subcellular location is the cell inner membrane. Functionally, produces ATP from ADP in the presence of a proton gradient across the membrane. The gamma chain is believed to be important in regulating ATPase activity and the flow of protons through the CF(0) complex. The protein is ATP synthase gamma chain of Paracidovorax citrulli (strain AAC00-1) (Acidovorax citrulli).